Here is a 163-residue protein sequence, read N- to C-terminus: Putative H/ACA ribonucleoprotein complex subunit 2-like protein (163 aa).

Residues 1 to 27 (MGKRNLDETMNESTVSEANGDATAPTT) are disordered.

It belongs to the eukaryotic ribosomal protein eL8 family. In terms of assembly, component of the small nucleolar ribonucleoprotein particle containing H/ACA-type snoRNAs (H/ACA snoRNPs).

It is found in the nucleus. The protein localises to the nucleolus. Functionally, required for ribosome biogenesis. Part of a complex which catalyzes pseudouridylation of rRNA. This involves the isomerization of uridine such that the ribose is subsequently attached to C5, instead of the normal N1. Pseudouridine ('psi') residues may serve to stabilize the conformation of rRNAs. The sequence is that of Putative H/ACA ribonucleoprotein complex subunit 2-like protein from Caenorhabditis elegans.